We begin with the raw amino-acid sequence, 349 residues long: UDP-N-acetylenolpyruvoylglucosamine reductase (349 aa).

In terms of domain architecture, FAD-binding PCMH-type spans 25 to 197 (GIAARARFAA…VAVTFRLPKQ (173 aa)). Arg-173 is an active-site residue. The Proton donor role is filled by Ser-249. Residue Glu-345 is part of the active site.

Belongs to the MurB family. FAD is required as a cofactor.

The protein resides in the cytoplasm. It carries out the reaction UDP-N-acetyl-alpha-D-muramate + NADP(+) = UDP-N-acetyl-3-O-(1-carboxyvinyl)-alpha-D-glucosamine + NADPH + H(+). It functions in the pathway cell wall biogenesis; peptidoglycan biosynthesis. Cell wall formation. In Burkholderia orbicola (strain MC0-3), this protein is UDP-N-acetylenolpyruvoylglucosamine reductase.